Here is a 976-residue protein sequence, read N- to C-terminus: Collagen alpha-1(I) chain (976 aa).

Residue S1 is modified to Phosphoserine. Positions 1 to 976 are disordered; the sequence is SAGGISVPGP…PGPPGPPGPP (976 aa). 11 positions are modified to 4-hydroxyproline: P20, P23, P26, P35, P38, P41, P55, P70, P76, P85, and P91. A compositionally biased stretch (basic and acidic residues) spans 58–72; it reads NGDDGEAGKPGRPGE. K94 carries the post-translational modification 5-hydroxylysine; alternate. An O-linked (Gal...) hydroxylysine; alternate glycan is attached at K94. At S100 the chain carries Phosphoserine. Composition is skewed to low complexity over residues 108-118 and 132-150; these read DAGPAGPKGAP and PGAS…TGAA. 4-hydroxyproline is present on residues P118, P132, P153, P162, P165, P192, P195, P207, P213, P222, P228, P231, and P246. The segment covering 152-164 has biased composition (pro residues); it reads PPGPTGPAGPPGF. Positions 198 to 237 are enriched in low complexity; it reads AGAAGPAGNPGADGQPGAKGANGAPGIAGAPGFPGARGPS. The residue at position 249 (K249) is a 5-hydroxylysine. 4-hydroxyproline is present on residues P255, P258, P266, P275, P290, P296, P304, and P310. Over residues 294 to 308 the composition is skewed to gly residues; sequence GLPGPGERGGPGSRG. 5-hydroxylysine is present on K319. 25 positions are modified to 4-hydroxyproline: P328, P337, P343, P349, P358, P361, P370, P379, P385, P397, P406, P415, P418, P436, P453, P459, P465, P471, P477, P483, P495, P504, P517, P523, and P532. Residues 352–378 show a composition bias toward low complexity; that stretch reads KGLTGSPGSPGPDGKTGPPGPAGQDGR. A compositionally biased stretch (low complexity) spans 387 to 406; that stretch reads ARGQAGVMGFPGPKGAAGEP. A compositionally biased stretch (low complexity) spans 465–474; that stretch reads PGEAGKPGEQ. K544 carries the post-translational modification 5-hydroxylysine. Residues P550, P565, and P571 each carry the 4-hydroxyproline modification. Over residues 577–591 the composition is skewed to low complexity; sequence SGPSGPAGPTGARGA. S580 is subject to Phosphoserine. A 4-hydroxyproline mark is found at P592, P598, P601, P610, P616, P634, P643, and P652. The segment covering 604–631 has biased composition (low complexity); the sequence is AGFAGPPGADGQPGAKGEPGDAGAKGDA. At K655 the chain carries 5-hydroxylysine. A compositionally biased stretch (low complexity) spans 660–676; it reads SAGPPGATGFPGAAGRV. P664 and P670 each carry 4-hydroxyproline. Position 678 is a 3-hydroxyproline (P678). 4-hydroxyproline is present on residues P679, P688, P691, P718, P726, P735, P753, P762, P765, P771, P786, P792, P798, P806, and P812. The span at 723–735 shows a compositional bias: low complexity; the sequence is KGSPGADGPAGAP. Positions 785-795 are enriched in pro residues; sequence PPGPMGPPGLA. K821 bears the 5-hydroxylysine mark. The segment covering 829–844 has biased composition (pro residues); it reads PGPPGAPGAPGAPGPV. 4-hydroxyproline occurs at positions 832, 835, and 838. Low complexity predominate over residues 864-878; it reads AGPAGARGPAGPQGP. Over residues 879–893 the composition is skewed to basic and acidic residues; the sequence is RGDKGETGEQGDRGI. 5-hydroxylysine is present on K882. The residue at position 894 (K894) is a 5-hydroxylysine; alternate. K894 carries O-linked (Gal...) hydroxylysine; alternate glycosylation. 4 positions are modified to 4-hydroxyproline: P907, P910, P928, and P943. Residues 910 to 943 show a composition bias toward low complexity; it reads PGEQGPSGASGPAGPRGPPGSAGSPGKDGLNGLP. Residue P948 is modified to 3-hydroxyproline. P949 is modified (4-hydroxyproline). Pro residues predominate over residues 961–976; sequence VGPPGPPGPPGPPGPP. Position 963 is a 3-hydroxyproline (P963). P964 bears the 4-hydroxyproline mark. P966 carries the post-translational modification 3-hydroxyproline. Position 967 is a 4-hydroxyproline (P967). P969 bears the 3-hydroxyproline mark. P970, P973, and P976 each carry 4-hydroxyproline.

Belongs to the fibrillar collagen family. Trimers of one alpha 2(I) and two alpha 1(I) chains. Contains mostly 4-hydroxyproline. Proline residues at the third position of the tripeptide repeating unit (G-X-Y) are hydroxylated in some or all of the chains. Post-translationally, contains 3-hydroxyproline at a few sites. This modification occurs on the first proline residue in the sequence motif Gly-Pro-Hyp, where Hyp is 4-hydroxyproline. In terms of processing, lysine residues at the third position of the tripeptide repeating unit (G-X-Y) are 5-hydroxylated in some or all of the chains. O-glycosylated on hydroxylated lysine residues. The O-linked glycan consists of a Glc-Gal disaccharide. Expressed in bones.

It localises to the secreted. It is found in the extracellular space. The protein resides in the extracellular matrix. Its function is as follows. Type I collagen is a member of group I collagen (fibrillar forming collagen). The protein is Collagen alpha-1(I) chain of Acratocnus ye (Hispaniolan ground sloth).